The primary structure comprises 380 residues: MSCPYASNGNEHDDGAIPLSNEVGKIYGEYLMLDKLLDAQCMLSMEDKRPVHDEHLFIITHQAYELWFKQIIFEFDSIRDMLDAEVIDETKTLEIVKRLNRVVLILKLLVDQVPILETMTPLDFMDFRKYLAPASGFQSLQFRLIENKLGVLTEQRVKYNQKYTDVFGNDKKALHAIRDSEDSPSLLTLVQRWLERTPGLEEDGFNFWAKFQQSVDQFLAAQVQSAMLEPVERAKNYRLMDIEKRREVYRSIFDPAVHDALVKRGDRRFSHRALQGAIMITFYRDEPRFSQPHQLLTLLMDIDSLITKWRYNHVIMVQRMIGSQQLGTGGSSGYQYLRSTLSDRYKVFLDLFNLSTFLIPREAIPPLDETIRRKLIHKSV.

Residues 57–61 (FIITH) and arginine 128 contribute to the substrate site. Residue histidine 313 coordinates heme. Substrate is bound at residue threonine 328.

The protein belongs to the tryptophan 2,3-dioxygenase family. As to quaternary structure, homotetramer. Dimer of dimers. The cofactor is heme.

The enzyme catalyses L-tryptophan + O2 = N-formyl-L-kynurenine. Its pathway is amino-acid degradation; L-tryptophan degradation via kynurenine pathway; L-kynurenine from L-tryptophan: step 1/2. It participates in pigment biosynthesis; ommochrome biosynthesis. Heme-dependent dioxygenase that catalyzes the oxidative cleavage of the L-tryptophan (L-Trp) pyrrole ring and converts L-tryptophan to N-formyl-L-kynurenine. Catalyzes the oxidative cleavage of the indole moiety. The chain is Tryptophan 2,3-dioxygenase from Drosophila mojavensis (Fruit fly).